Reading from the N-terminus, the 734-residue chain is Phosphoribosylformylglycinamidine synthase subunit PurL (734 aa).

Histidine 49 is a catalytic residue. Tyrosine 52 and lysine 91 together coordinate ATP. Residue glutamate 93 coordinates Mg(2+). Residues 94 to 97 (SHNH) and arginine 116 each bind substrate. Catalysis depends on histidine 95, which acts as the Proton acceptor. Residue aspartate 117 participates in Mg(2+) binding. Glutamine 240 is a binding site for substrate. Residue aspartate 268 coordinates Mg(2+). 312–314 (ESQ) contributes to the substrate binding site. ATP contacts are provided by aspartate 491 and glycine 528. Asparagine 529 contributes to the Mg(2+) binding site. Serine 531 provides a ligand contact to substrate.

Belongs to the FGAMS family. Monomer. Part of the FGAM synthase complex composed of 1 PurL, 1 PurQ and 2 PurS subunits.

It is found in the cytoplasm. The enzyme catalyses N(2)-formyl-N(1)-(5-phospho-beta-D-ribosyl)glycinamide + L-glutamine + ATP + H2O = 2-formamido-N(1)-(5-O-phospho-beta-D-ribosyl)acetamidine + L-glutamate + ADP + phosphate + H(+). The protein operates within purine metabolism; IMP biosynthesis via de novo pathway; 5-amino-1-(5-phospho-D-ribosyl)imidazole from N(2)-formyl-N(1)-(5-phospho-D-ribosyl)glycinamide: step 1/2. Functionally, part of the phosphoribosylformylglycinamidine synthase complex involved in the purines biosynthetic pathway. Catalyzes the ATP-dependent conversion of formylglycinamide ribonucleotide (FGAR) and glutamine to yield formylglycinamidine ribonucleotide (FGAM) and glutamate. The FGAM synthase complex is composed of three subunits. PurQ produces an ammonia molecule by converting glutamine to glutamate. PurL transfers the ammonia molecule to FGAR to form FGAM in an ATP-dependent manner. PurS interacts with PurQ and PurL and is thought to assist in the transfer of the ammonia molecule from PurQ to PurL. This Zymomonas mobilis subsp. mobilis (strain ATCC 31821 / ZM4 / CP4) protein is Phosphoribosylformylglycinamidine synthase subunit PurL.